Consider the following 213-residue polypeptide: tRNA (guanine-N(7)-)-methyltransferase (213 aa).

4 residues coordinate S-adenosyl-L-methionine: glutamate 44, glutamate 69, aspartate 96, and aspartate 118. Aspartate 118 is an active-site residue. Lysine 122 provides a ligand contact to substrate. The tract at residues 124–129 is interaction with RNA; it reads RHEKRR. Substrate is bound by residues aspartate 154 and 191–194; that span reads TEYE.

This sequence belongs to the class I-like SAM-binding methyltransferase superfamily. TrmB family. As to quaternary structure, homodimer.

It carries out the reaction guanosine(46) in tRNA + S-adenosyl-L-methionine = N(7)-methylguanosine(46) in tRNA + S-adenosyl-L-homocysteine. The protein operates within tRNA modification; N(7)-methylguanine-tRNA biosynthesis. In terms of biological role, catalyzes the formation of N(7)-methylguanine at position 46 (m7G46) in tRNA. The polypeptide is tRNA (guanine-N(7)-)-methyltransferase (Bacillus subtilis (strain 168)).